We begin with the raw amino-acid sequence, 425 residues long: Protein CLP1 homolog (425 aa).

Residues E18, K59, and D121–T126 each bind ATP.

It belongs to the Clp1 family. Clp1 subfamily.

It is found in the nucleus. Its function is as follows. Required for endonucleolytic cleavage during polyadenylation-dependent pre-mRNA 3'-end formation. This Drosophila pseudoobscura pseudoobscura (Fruit fly) protein is Protein CLP1 homolog (cbc).